Reading from the N-terminus, the 125-residue chain is Large ribosomal subunit protein bL19 (125 aa).

The protein belongs to the bacterial ribosomal protein bL19 family.

Functionally, this protein is located at the 30S-50S ribosomal subunit interface and may play a role in the structure and function of the aminoacyl-tRNA binding site. This is Large ribosomal subunit protein bL19 from Ehrlichia chaffeensis (strain ATCC CRL-10679 / Arkansas).